The following is a 310-amino-acid chain: Fructose-bisphosphate aldolase/6-deoxy-5-ketofructose 1-phosphate synthase (310 aa).

Substrate-binding positions include 48 to 49, histidine 53, aspartate 57, and tryptophan 180; that span reads DQ. Catalysis depends on tyrosine 182, which acts as the Proton donor. Residues arginine 184, 213–215, 241–243, and 270–271 each bind substrate; these read KVN, AGG, and GR. Lysine 213 acts as the Schiff-base intermediate with dihydroxyacetone-P in catalysis. The active-site Schiff-base intermediate with substrate is lysine 213.

It belongs to the DeoC/FbaB aldolase family.

The enzyme catalyses beta-D-fructose 1,6-bisphosphate = D-glyceraldehyde 3-phosphate + dihydroxyacetone phosphate. It catalyses the reaction beta-D-fructose 1,6-bisphosphate + methylglyoxal = 1-deoxy-D-threo-hexo-2,5-diulose 6-phosphate + D-glyceraldehyde 3-phosphate. The catalysed reaction is beta-D-fructose 1-phosphate + methylglyoxal = 1-deoxy-D-threo-hexo-2,5-diulose 6-phosphate + D-glyceraldehyde. It participates in aromatic compound metabolism. In terms of biological role, catalyzes the transaldolization of either fructose-1-P or fructose-1,6-bisphosphate with methylglyoxal to produce 6-deoxy-5-ketofructose-1-phosphate (DKFP). Also catalyzes the reversible aldol condensation of dihydroxyacetone phosphate (DHAP or glycerone-phosphate) with glyceraldehyde 3-phosphate (G3P or GAP) to produce fructose 1,6-bisphosphate (FBP). This Methanocaldococcus jannaschii (strain ATCC 43067 / DSM 2661 / JAL-1 / JCM 10045 / NBRC 100440) (Methanococcus jannaschii) protein is Fructose-bisphosphate aldolase/6-deoxy-5-ketofructose 1-phosphate synthase.